Here is a 316-residue protein sequence, read N- to C-terminus: UPF0324 membrane protein SO_4708 (316 aa).

Helical transmembrane passes span 61-80 (LLSY…AAIE), 85-107 (NLGL…TRAL), 114-136 (GHLI…APAV), 146-168 (ALAC…GHLL), 175-197 (FGVW…SAYG), 207-226 (IKLA…ALIF), 233-252 (LNLP…AHWL), 262-281 (LFMV…GAGI), and 293-315 (PLLL…ILYF).

Belongs to the UPF0324 family.

The protein resides in the cell membrane. This Shewanella oneidensis (strain ATCC 700550 / JCM 31522 / CIP 106686 / LMG 19005 / NCIMB 14063 / MR-1) protein is UPF0324 membrane protein SO_4708.